The following is a 201-amino-acid chain: Dephospho-CoA kinase (201 aa).

In terms of domain architecture, DPCK spans 10 to 201 (LIGLTGGIAT…PQIIKAWHHR (192 aa)). ATP is bound at residue 18–23 (ATGKST).

Belongs to the CoaE family.

Its subcellular location is the cytoplasm. It catalyses the reaction 3'-dephospho-CoA + ATP = ADP + CoA + H(+). It participates in cofactor biosynthesis; coenzyme A biosynthesis; CoA from (R)-pantothenate: step 5/5. Catalyzes the phosphorylation of the 3'-hydroxyl group of dephosphocoenzyme A to form coenzyme A. The sequence is that of Dephospho-CoA kinase from Synechocystis sp. (strain ATCC 27184 / PCC 6803 / Kazusa).